A 388-amino-acid chain; its full sequence is Succinate--CoA ligase [ADP-forming] subunit beta (388 aa).

The 236-residue stretch at 9-244 (KSLFAEYGLP…PSQDDAREAH (236 aa)) folds into the ATP-grasp domain. ATP is bound by residues Lys46, 53-55 (GRG), Glu99, Thr102, and Glu107. Asn199 and Asp213 together coordinate Mg(2+). Residues Asn264 and 321–323 (GIV) contribute to the substrate site.

The protein belongs to the succinate/malate CoA ligase beta subunit family. Heterotetramer of two alpha and two beta subunits. Mg(2+) is required as a cofactor.

It catalyses the reaction succinate + ATP + CoA = succinyl-CoA + ADP + phosphate. It carries out the reaction GTP + succinate + CoA = succinyl-CoA + GDP + phosphate. It functions in the pathway carbohydrate metabolism; tricarboxylic acid cycle; succinate from succinyl-CoA (ligase route): step 1/1. Succinyl-CoA synthetase functions in the citric acid cycle (TCA), coupling the hydrolysis of succinyl-CoA to the synthesis of either ATP or GTP and thus represents the only step of substrate-level phosphorylation in the TCA. The beta subunit provides nucleotide specificity of the enzyme and binds the substrate succinate, while the binding sites for coenzyme A and phosphate are found in the alpha subunit. The chain is Succinate--CoA ligase [ADP-forming] subunit beta from Shewanella denitrificans (strain OS217 / ATCC BAA-1090 / DSM 15013).